Reading from the N-terminus, the 359-residue chain is 3-isopropylmalate dehydrogenase (359 aa).

Arg97, Arg107, Arg135, and Asp224 together coordinate substrate. Positions 224, 248, and 252 each coordinate Mg(2+). 282–294 lines the NAD(+) pocket; the sequence is GSAPDIAGKDIAN.

It belongs to the isocitrate and isopropylmalate dehydrogenases family. LeuB type 1 subfamily. In terms of assembly, homodimer. It depends on Mg(2+) as a cofactor. Mn(2+) serves as cofactor.

The protein resides in the cytoplasm. The enzyme catalyses (2R,3S)-3-isopropylmalate + NAD(+) = 4-methyl-2-oxopentanoate + CO2 + NADH. The protein operates within amino-acid biosynthesis; L-leucine biosynthesis; L-leucine from 3-methyl-2-oxobutanoate: step 3/4. Functionally, catalyzes the oxidation of 3-carboxy-2-hydroxy-4-methylpentanoate (3-isopropylmalate) to 3-carboxy-4-methyl-2-oxopentanoate. The product decarboxylates to 4-methyl-2 oxopentanoate. The chain is 3-isopropylmalate dehydrogenase from Prochlorococcus marinus (strain NATL2A).